Consider the following 386-residue polypeptide: 3-hydroxyisobutyryl-CoA hydrolase, mitochondrial (386 aa).

The N-terminal 32 residues, 1–32 (MGQREMWRLMSRFNAFKRTNTILHHLRMSKHT), are a transit peptide targeting the mitochondrion. Residues K55 and K92 each carry the N6-acetyllysine; alternate modification. 2 positions are modified to N6-succinyllysine; alternate: K55 and K92. Substrate is bound by residues E121, G146, E169, and D177. K221 is subject to N6-acetyllysine; alternate. Position 221 is an N6-succinyllysine; alternate (K221). A Phosphoserine modification is found at S234. An N6-succinyllysine modification is found at K257. Position 297 is an N6-acetyllysine; alternate (K297). Residue K297 is modified to N6-succinyllysine; alternate. At K301 the chain carries N6-succinyllysine. Residue K353 is modified to N6-acetyllysine; alternate. K353 is subject to N6-succinyllysine; alternate. S356 is subject to Phosphoserine. K360 and K365 each carry N6-acetyllysine. K377 is modified (N6-succinyllysine).

It belongs to the enoyl-CoA hydratase/isomerase family. As to expression, highly expressed in liver and kidney, also detected in heart, muscle and brain (at protein level). Not detected in lung.

It is found in the mitochondrion. The enzyme catalyses 3-hydroxy-2-methylpropanoyl-CoA + H2O = 3-hydroxy-2-methylpropanoate + CoA + H(+). It functions in the pathway amino-acid degradation; L-valine degradation. Its function is as follows. Hydrolyzes 3-hydroxyisobutyryl-CoA (HIBYL-CoA), a saline catabolite. Has high activity toward isobutyryl-CoA. Could be an isobutyryl-CoA dehydrogenase that functions in valine catabolism. Also hydrolyzes 3-hydroxypropanoyl-CoA. The protein is 3-hydroxyisobutyryl-CoA hydrolase, mitochondrial (HIBCH) of Homo sapiens (Human).